Consider the following 620-residue polypeptide: Threonine--tRNA ligase (620 aa).

The tract at residues 1 to 141 (MKMLLIHSDY…LSRKIVAKEE (141 aa)) is editing domain. Residues 197–496 (PHVKFIKEKD…AEKGNAPMLP (300 aa)) form a catalytic region. Zn(2+) contacts are provided by cysteine 289, histidine 341, and histidine 465.

Belongs to the class-II aminoacyl-tRNA synthetase family. In terms of assembly, homodimer. It depends on Zn(2+) as a cofactor.

It localises to the cytoplasm. It catalyses the reaction tRNA(Thr) + L-threonine + ATP = L-threonyl-tRNA(Thr) + AMP + diphosphate + H(+). Its activity is regulated as follows. Not inhibited by 1 uM borrelidin (BN); probably does not bind BN. In terms of biological role, catalyzes the attachment of threonine to tRNA(Thr) in a two-step reaction: L-threonine is first activated by ATP to form Thr-AMP and then transferred to the acceptor end of tRNA(Thr). Also activates L-serine, but does not detectably transfer it to tRNA(Thr). Edits incorrectly charged L-seryl-tRNA(Thr) via its editing domain. Has no activity on correctly acylated L-seryl-tRNA(Ser) or L-threonyl-tRNA(Thr). Deacylates correctly charged glycyl-tRNA(Gly), but not glycyl-tRNA(Gly)(2'-dA76) (the terminal 2'-OH of tRNA adenine 76 has been dehydroxylated) nor the 2'-fluoro tRNA derivative, strongly suggesting the editing function is tRNA catalyzed. The polypeptide is Threonine--tRNA ligase (Methanocaldococcus jannaschii (strain ATCC 43067 / DSM 2661 / JAL-1 / JCM 10045 / NBRC 100440) (Methanococcus jannaschii)).